A 354-amino-acid chain; its full sequence is 4-hydroxy-3-methylbut-2-en-1-yl diphosphate synthase (flavodoxin) (354 aa).

Positions 262, 265, 297, and 304 each coordinate [4Fe-4S] cluster.

It belongs to the IspG family. The cofactor is [4Fe-4S] cluster.

It catalyses the reaction (2E)-4-hydroxy-3-methylbut-2-enyl diphosphate + oxidized [flavodoxin] + H2O + 2 H(+) = 2-C-methyl-D-erythritol 2,4-cyclic diphosphate + reduced [flavodoxin]. Its pathway is isoprenoid biosynthesis; isopentenyl diphosphate biosynthesis via DXP pathway; isopentenyl diphosphate from 1-deoxy-D-xylulose 5-phosphate: step 5/6. In terms of biological role, converts 2C-methyl-D-erythritol 2,4-cyclodiphosphate (ME-2,4cPP) into 1-hydroxy-2-methyl-2-(E)-butenyl 4-diphosphate. This chain is 4-hydroxy-3-methylbut-2-en-1-yl diphosphate synthase (flavodoxin), found in Helicobacter hepaticus (strain ATCC 51449 / 3B1).